Reading from the N-terminus, the 336-residue chain is Probable carboxylesterase 6 (336 aa).

Residues 1-20 form a disordered region; sequence MGGTKLTHVTTTNPNNSNIH. Over residues 7 to 19 the composition is skewed to polar residues; the sequence is THVTTTNPNNSNI. Residues 96-98 carry the Involved in the stabilization of the negatively charged intermediate by the formation of the oxyanion hole motif; sequence HGG. Active-site residues include Ser176, Asp276, and His303.

This sequence belongs to the 'GDXG' lipolytic enzyme family. In terms of tissue distribution, expressed in roots, leaves, flowers and siliques.

The catalysed reaction is a carboxylic ester + H2O = an alcohol + a carboxylate + H(+). In terms of biological role, carboxylesterase acting on esters with varying acyl chain length. The protein is Probable carboxylesterase 6 (CXE6) of Arabidopsis thaliana (Mouse-ear cress).